We begin with the raw amino-acid sequence, 249 residues long: ATP synthase subunit a, chloroplastic (249 aa).

The next 5 helical transmembrane spans lie at 40-60 (QVLI…VLVV), 97-117 (VPFI…GALL), 136-156 (INTT…AGLS), 201-221 (LVVV…VMFL), and 222-242 (GLFT…AYIG).

Belongs to the ATPase A chain family. As to quaternary structure, F-type ATPases have 2 components, CF(1) - the catalytic core - and CF(0) - the membrane proton channel. CF(1) has five subunits: alpha(3), beta(3), gamma(1), delta(1), epsilon(1). CF(0) has four main subunits: a, b, b' and c.

The protein resides in the plastid. It is found in the chloroplast thylakoid membrane. In terms of biological role, key component of the proton channel; it plays a direct role in the translocation of protons across the membrane. The chain is ATP synthase subunit a, chloroplastic from Aethionema grandiflorum (Persian stone-cress).